Here is a 507-residue protein sequence, read N- to C-terminus: AMSH-like ubiquitin thioesterase 3 (507 aa).

Positions 73-107 (QERLGSRKRLRAVINELESLKPEFNQLVDKLNRVE) form a coiled coil. 2 disordered regions span residues 133–162 (HKAS…LTSS) and 214–242 (PSNT…LNGD). Polar residues-rich tracts occupy residues 146–162 (LPTS…LTSS), 214–224 (PSNTDWGSADN), and 232–242 (PSSSSASLNGD). Positions 333–463 (LHVPVRIMDD…IFHLSDPSGV (131 aa)) constitute an MPN domain. The Zn(2+) site is built by His411, His413, Asp424, His426, Cys469, His475, and His477. The JAMM motif motif lies at 411-424 (HTHPTQTCFMSSVD).

The protein belongs to the peptidase M67C family. In terms of assembly, interacts with PATL1 and PATL2. May also bind to HSC70-1, HSC70-3, VHA-A, BGLU23 and EPSIN1. Interacts with BRO1/ALIX. Zn(2+) is required as a cofactor.

Its subcellular location is the membrane. The protein resides in the cytoplasm. It localises to the vacuole membrane. The protein localises to the late endosome. In terms of biological role, zinc metalloprotease that cleaves 'Lys-48'- and 'Lys-63'-linked polyubiquitin chains, but is not implicated in protein degradation by the 26S proteasome, deneddylation, or desumoylation. Required for intracellular trafficking (e.g. trafficking from the Golgi to the vacuole and the vacuolar trafficking of endocytosed cargo), endocytosis and vacuole biogenesis. The polypeptide is AMSH-like ubiquitin thioesterase 3 (AMSH3) (Arabidopsis thaliana (Mouse-ear cress)).